The following is a 306-amino-acid chain: Epoxyqueuosine reductase (306 aa).

Residue aspartate 131 is the Proton donor of the active site. In terms of domain architecture, 4Fe-4S ferredoxin-type spans 173-205; it reads LDLTYDHPVTDHCGTCTACIDACPTQAIVQPYV. Residues cysteine 185, cysteine 188, cysteine 191, cysteine 195, cysteine 211, cysteine 238, cysteine 241, and cysteine 245 each contribute to the [4Fe-4S] cluster site.

Belongs to the QueG family. In terms of assembly, monomer. It depends on cob(II)alamin as a cofactor. The cofactor is [4Fe-4S] cluster.

It localises to the cytoplasm. It catalyses the reaction epoxyqueuosine(34) in tRNA + AH2 = queuosine(34) in tRNA + A + H2O. Its pathway is tRNA modification; tRNA-queuosine biosynthesis. In terms of biological role, catalyzes the conversion of epoxyqueuosine (oQ) to queuosine (Q), which is a hypermodified base found in the wobble positions of tRNA(Asp), tRNA(Asn), tRNA(His) and tRNA(Tyr). This chain is Epoxyqueuosine reductase, found in Cellulophaga algicola (strain DSM 14237 / IC166 / ACAM 630).